Consider the following 330-residue polypeptide: MTHAVTLRGPSPWGFRLVGGRDFSAPLTISRVHAGSKAALAALCPGDSIQAINGESTELMTHLEAQNRIKGCHDHLTLSVSRPENKNWPSSPNDKAQAHRIHIDPEAQDGSPATSRRSSISGISLEDNRSGLGSPYGQPPRLPVPHNGSSNEVTLPSQMSALHVSPPPSADTPRILPRNRDCRVDLGSEVYRMLREPAEPAASEPKQSGSFRYLQGMLEAGEGGDRPGSGGSRNLKPAASKLGAPLSGLQGLPECTRCGHGIVGTIVKARDKLYHPECFMCSDCGLNLKQRGYFFLDERLYCENHAKARVKPPEGYDVVAVYPNAKVELV.

The PDZ domain maps to 1-84 (MTHAVTLRGP…HLTLSVSRPE (84 aa)). Disordered stretches follow at residues 104-154 (DPEA…NEVT) and 219-239 (EAGE…KPAA). A phosphoserine mark is found at Ser111, Ser115, Ser118, Ser119, Ser124, and Ser134. The span at 111–122 (SPATSRRSSISG) shows a compositional bias: polar residues. The region spanning 255–305 (CTRCGHGIVGTIVKARDKLYHPECFMCSDCGLNLKQRGYFFLDERLYCENH) is the LIM zinc-binding domain.

Homodimer. Interacts (via C-terminus only or via combined C-terminus and LIM domain, but not LIM domain only) with PTPN13 (via the second or fourth PDZ domains). Found in a complex with PTPN13 and TRIP6. Interacts (via PDZ domain) with ACTN1 and ACTN2 (via C-terminal SDL residues). Interacts (via PDZ domain) with TRIP6 (via the second LIM domain or via the third LIM domain plus C-terminus). Interacts (via LIM domain) with GRIA1 (via C-terminus); this interaction as well as the interaction with alpha-actinin is required for their colocalization in early endosomes. Interacts with PDLIM1. Forms (via LIM domain) a heterodimer with PDLIM3. Interacts directly with SRC (via kinase domain and to a lesser extent the SH2 domain). Phosphorylated on tyrosine residue(s). Can be dephosphorylated by PTPN13. In terms of tissue distribution, detected in several tissues, most prominent in brain and heart of adults. Expressed in embryonic fibroblasts.

It is found in the cytoplasm. The protein resides in the cytoskeleton. Its subcellular location is the cell projection. It localises to the dendritic spine. The protein localises to the early endosome membrane. It is found in the recycling endosome membrane. The protein resides in the nucleus. Its subcellular location is the perinuclear region. It localises to the lamellipodium. The protein localises to the synapse. It is found in the synaptosome. Functionally, suppresses SRC activation by recognizing and binding to active SRC and facilitating PTPN13-mediated dephosphorylation of SRC 'Tyr-419' leading to its inactivation. Inactivated SRC dissociates from this protein allowing the initiation of a new SRC inactivation cycle. Involved in reorganization of the actin cytoskeleton. In nonmuscle cells, binds to ACTN1 (alpha-actinin-1), increases the affinity of ACTN1 to F-actin (filamentous actin), and promotes formation of actin stress fibers. Involved in regulation of the synaptic AMPA receptor transport in dendritic spines of hippocampal pyramidal neurons directing the receptors toward an insertion at the postsynaptic membrane. Links endosomal surface-internalized GRIA1-containing AMPA receptors to the alpha-actinin/actin cytoskeleton. Increases AMPA receptor-mediated excitatory postsynaptic currents in neurons. The protein is PDZ and LIM domain protein 4 (Pdlim4) of Rattus norvegicus (Rat).